The sequence spans 200 residues: Small ribosomal subunit protein eS1 (200 aa).

It belongs to the eukaryotic ribosomal protein eS1 family.

The polypeptide is Small ribosomal subunit protein eS1 (Thermococcus onnurineus (strain NA1)).